The chain runs to 188 residues: Elongation factor P (188 aa).

K34 carries the post-translational modification N6-(3,6-diaminohexanoyl)-5-hydroxylysine.

Belongs to the elongation factor P family. May be beta-lysylated on the epsilon-amino group of Lys-34 by the combined action of EpmA and EpmB, and then hydroxylated on the C5 position of the same residue by EpmC (if this protein is present). Lysylation is critical for the stimulatory effect of EF-P on peptide-bond formation. The lysylation moiety may extend toward the peptidyltransferase center and stabilize the terminal 3-CCA end of the tRNA. Hydroxylation of the C5 position on Lys-34 may allow additional potential stabilizing hydrogen-bond interactions with the P-tRNA.

The protein resides in the cytoplasm. Its pathway is protein biosynthesis; polypeptide chain elongation. Involved in peptide bond synthesis. Alleviates ribosome stalling that occurs when 3 or more consecutive Pro residues or the sequence PPG is present in a protein, possibly by augmenting the peptidyl transferase activity of the ribosome. Modification of Lys-34 is required for alleviation. The polypeptide is Elongation factor P (Sodalis glossinidius (strain morsitans)).